A 400-amino-acid chain; its full sequence is Octopine dehydrogenase (400 aa).

Residues 10-13 (GGNG) and 35-38 (FADE) contribute to the NADH site. Pyruvate-binding residues include Gln118 and Thr143. Gln118 is a substrate binding site. An NAD(+)-binding site is contributed by Cys148. An L-arginine-binding site is contributed by Met206. His212 is a pyruvate binding site. His212 is an active-site residue. Residue Arg324 participates in NAD(+) binding.

This sequence belongs to the lysopine/nopaline/octopine/opine/vitopine dehydrogenases family.

The catalysed reaction is D-octopine + NAD(+) + H2O = L-arginine + pyruvate + NADH + H(+). Its function is as follows. Catalyzes the reverse reaction of octopine dehydrogenation. Acts on L-arginine in preference to other substrates. The protein is Octopine dehydrogenase of Mizuhopecten yessoensis (Japanese scallop).